Here is a 375-residue protein sequence, read N- to C-terminus: Tubulinyl-Tyr carboxypeptidase 1 (375 aa).

Residues 1–33 (MPGGKKVVPSGSSSASPNAAATTTAAAAAAAAA) show a composition bias toward low complexity. A disordered region spans residues 1 to 69 (MPGGKKVVPS…EEDLRDGGVP (69 aa)). A compositionally biased stretch (acidic residues) spans 53 to 63 (EEPEEEGEEDL). Active-site residues include Cys-179, His-214, and Ser-231. The disordered stretch occupies residues 309 to 375 (RDMRLKIGKG…PDLSGYQIRV (67 aa)). The tract at residues 329 to 375 (KKDVSSPQRAQSSPHRRNSRSERRPSGEKKPAEPKAMPDLSGYQIRV) is involved in heparin-binding and antiangiogenic activity. The span at 347 to 361 (SRSERRPSGEKKPAE) shows a compositional bias: basic and acidic residues.

Belongs to the transglutaminase-like superfamily. Vasohibin family. In terms of assembly, interacts with SVBP; interaction enhances VASH1 tyrosine carboxypeptidase activity. Post-translationally, ubiquitinated in vitro. In terms of tissue distribution, expressed at low level in proliferating endothelial cells at the sprouting front but highly expressed in nonproliferating endothelial cells in the termination zone.

Its subcellular location is the cytoplasm. The protein resides in the secreted. The catalysed reaction is C-terminal L-alpha-aminoacyl-L-glutamyl-L-glutamyl-L-tyrosyl-[tubulin] + H2O = C-terminal L-alpha-aminoacyl-L-glutamyl-L-glutamyl-[tubulin] + L-tyrosine. Tyrosine carboxypeptidase that removes the C-terminal tyrosine residue of alpha-tubulin, thereby regulating microtubule dynamics and function. Acts as an angiogenesis inhibitor: inhibits migration, proliferation and network formation by endothelial cells as well as angiogenesis. This inhibitory effect is selective to endothelial cells as it does not affect the migration of smooth muscle cells or fibroblasts. This chain is Tubulinyl-Tyr carboxypeptidase 1, found in Mus musculus (Mouse).